The sequence spans 650 residues: Cytosolic Fe-S cluster assembly factor NAR1 (650 aa).

[4Fe-4S] cluster contacts are provided by Cys22, Cys81, Cys84, Cys87, Cys215, Cys270, Cys480, and Cys484.

The protein belongs to the NARF family.

Functionally, component of the cytosolic Fe/S protein assembly machinery. Required for maturation of extramitochondrial Fe/S proteins. May play a role in the transfer of pre-assembled Fe/S clusters to target apoproteins. This Cryptococcus neoformans var. neoformans serotype D (strain JEC21 / ATCC MYA-565) (Filobasidiella neoformans) protein is Cytosolic Fe-S cluster assembly factor NAR1 (NAR1).